We begin with the raw amino-acid sequence, 29 residues long: Cyclotide mela-1 (29 aa).

The cyclopeptide (Gly-Asp) cross-link spans 1-29 (GKYTCGETCFKGKCYTPGCTCSYPICKKD). Cystine bridges form between Cys-5-Cys-19, Cys-9-Cys-21, and Cys-14-Cys-26.

In terms of processing, this is a cyclic peptide. Post-translationally, contains 3 disulfide bonds.

Its function is as follows. Probably participates in a plant defense mechanism (Potential). Binds to and induces leakage in phospholipd membranes, particularly ones containing 1-palmitoyl-2-oleophosphatidylethanolamine (POPE). In vitro, displays cytotoxicity against cultured cells but no hemolytic activity towards fresh erythrocytes. Not active against Gram-negative bacterium E.coli ATCC 25922 or Gram-positive bacterium S.aureus ATCC 25923 up to a concentration of 64 uM. This chain is Cyclotide mela-1, found in Melicytus latifolius (Norfolk Island mahoe).